A 179-amino-acid chain; its full sequence is Protein GrpE (179 aa).

Residues 1–22 (MTDNNIENNEEEIRKAPSANDR) form a disordered region. The segment covering 11–22 (EEIRKAPSANDR) has biased composition (basic and acidic residues).

This sequence belongs to the GrpE family. As to quaternary structure, homodimer.

The protein resides in the cytoplasm. In terms of biological role, participates actively in the response to hyperosmotic and heat shock by preventing the aggregation of stress-denatured proteins, in association with DnaK and GrpE. It is the nucleotide exchange factor for DnaK and may function as a thermosensor. Unfolded proteins bind initially to DnaJ; upon interaction with the DnaJ-bound protein, DnaK hydrolyzes its bound ATP, resulting in the formation of a stable complex. GrpE releases ADP from DnaK; ATP binding to DnaK triggers the release of the substrate protein, thus completing the reaction cycle. Several rounds of ATP-dependent interactions between DnaJ, DnaK and GrpE are required for fully efficient folding. The protein is Protein GrpE of Rickettsia canadensis (strain McKiel).